The following is a 204-amino-acid chain: Putative peptidase PfaP (204 aa).

The first 27 residues, 1–27 (MRLRKTRKIVVSMKDMAASGGYYIASS), serve as a signal peptide directing secretion. The active-site Nucleophile is serine 19. Catalysis depends on lysine 70, which acts as the Proton donor/acceptor.

The protein belongs to the peptidase S49 family.

In terms of biological role, possible protease. May be involved in export of periplasmic flagella proteins. The polypeptide is Putative peptidase PfaP (pfaP) (Leptospira borgpetersenii).